Consider the following 199-residue polypeptide: Holliday junction branch migration complex subunit RuvA (199 aa).

A domain I region spans residues 1-64; sequence MIALLTGRLA…EDSISLFGFR (64 aa). The segment at 65–143 is domain II; that stretch reads TLAEKEFFQL…KMDVAPSAQE (79 aa). The flexible linker stretch occupies residues 144-154; the sequence is APSSEAPAEVA. A domain III region spans residues 154–199; sequence ADDVASALVNLGYKEAVVRKVLAEMSIEPDASTEAVLRQALKVLMK.

Belongs to the RuvA family. In terms of assembly, homotetramer. Forms an RuvA(8)-RuvB(12)-Holliday junction (HJ) complex. HJ DNA is sandwiched between 2 RuvA tetramers; dsDNA enters through RuvA and exits via RuvB. An RuvB hexamer assembles on each DNA strand where it exits the tetramer. Each RuvB hexamer is contacted by two RuvA subunits (via domain III) on 2 adjacent RuvB subunits; this complex drives branch migration. In the full resolvosome a probable DNA-RuvA(4)-RuvB(12)-RuvC(2) complex forms which resolves the HJ.

It localises to the cytoplasm. Its function is as follows. The RuvA-RuvB-RuvC complex processes Holliday junction (HJ) DNA during genetic recombination and DNA repair, while the RuvA-RuvB complex plays an important role in the rescue of blocked DNA replication forks via replication fork reversal (RFR). RuvA specifically binds to HJ cruciform DNA, conferring on it an open structure. The RuvB hexamer acts as an ATP-dependent pump, pulling dsDNA into and through the RuvAB complex. HJ branch migration allows RuvC to scan DNA until it finds its consensus sequence, where it cleaves and resolves the cruciform DNA. In Geobacter sulfurreducens (strain ATCC 51573 / DSM 12127 / PCA), this protein is Holliday junction branch migration complex subunit RuvA.